A 59-amino-acid polypeptide reads, in one-letter code: Large ribosomal subunit protein bL32 (59 aa).

Positions 1-20 (MAVQQNKKSRSRKGMRRSHD) are disordered. Over residues 7-19 (KKSRSRKGMRRSH) the composition is skewed to basic residues.

It belongs to the bacterial ribosomal protein bL32 family.

The chain is Large ribosomal subunit protein bL32 from Nitratidesulfovibrio vulgaris (strain ATCC 29579 / DSM 644 / CCUG 34227 / NCIMB 8303 / VKM B-1760 / Hildenborough) (Desulfovibrio vulgaris).